We begin with the raw amino-acid sequence, 374 residues long: Queuine tRNA-ribosyltransferase (374 aa).

The Proton acceptor role is filled by Asp89. Substrate is bound by residues 89 to 93 (DSGGF), Asp143, Gln187, and Gly214. The segment at 245–251 (GVGKPED) is RNA binding. The active-site Nucleophile is Asp264. The segment at 269–273 (TRNAR) is RNA binding; important for wobble base 34 recognition. Zn(2+)-binding residues include Cys302, Cys304, Cys307, and His333.

Belongs to the queuine tRNA-ribosyltransferase family. As to quaternary structure, homodimer. Within each dimer, one monomer is responsible for RNA recognition and catalysis, while the other monomer binds to the replacement base PreQ1. Requires Zn(2+) as cofactor.

It carries out the reaction 7-aminomethyl-7-carbaguanine + guanosine(34) in tRNA = 7-aminomethyl-7-carbaguanosine(34) in tRNA + guanine. Its pathway is tRNA modification; tRNA-queuosine biosynthesis. Functionally, catalyzes the base-exchange of a guanine (G) residue with the queuine precursor 7-aminomethyl-7-deazaguanine (PreQ1) at position 34 (anticodon wobble position) in tRNAs with GU(N) anticodons (tRNA-Asp, -Asn, -His and -Tyr). Catalysis occurs through a double-displacement mechanism. The nucleophile active site attacks the C1' of nucleotide 34 to detach the guanine base from the RNA, forming a covalent enzyme-RNA intermediate. The proton acceptor active site deprotonates the incoming PreQ1, allowing a nucleophilic attack on the C1' of the ribose to form the product. After dissociation, two additional enzymatic reactions on the tRNA convert PreQ1 to queuine (Q), resulting in the hypermodified nucleoside queuosine (7-(((4,5-cis-dihydroxy-2-cyclopenten-1-yl)amino)methyl)-7-deazaguanosine). In Shewanella sp. (strain MR-4), this protein is Queuine tRNA-ribosyltransferase.